The following is a 320-amino-acid chain: Ferrochelatase (320 aa).

Positions 194 and 275 each coordinate Fe cation.

Belongs to the ferrochelatase family.

Its subcellular location is the cytoplasm. It carries out the reaction heme b + 2 H(+) = protoporphyrin IX + Fe(2+). Its pathway is porphyrin-containing compound metabolism; protoheme biosynthesis; protoheme from protoporphyrin-IX: step 1/1. Functionally, catalyzes the ferrous insertion into protoporphyrin IX. In Klebsiella pneumoniae (strain 342), this protein is Ferrochelatase.